A 156-amino-acid chain; its full sequence is SsrA-binding protein (156 aa).

The protein belongs to the SmpB family.

It localises to the cytoplasm. In terms of biological role, required for rescue of stalled ribosomes mediated by trans-translation. Binds to transfer-messenger RNA (tmRNA), required for stable association of tmRNA with ribosomes. tmRNA and SmpB together mimic tRNA shape, replacing the anticodon stem-loop with SmpB. tmRNA is encoded by the ssrA gene; the 2 termini fold to resemble tRNA(Ala) and it encodes a 'tag peptide', a short internal open reading frame. During trans-translation Ala-aminoacylated tmRNA acts like a tRNA, entering the A-site of stalled ribosomes, displacing the stalled mRNA. The ribosome then switches to translate the ORF on the tmRNA; the nascent peptide is terminated with the 'tag peptide' encoded by the tmRNA and targeted for degradation. The ribosome is freed to recommence translation, which seems to be the essential function of trans-translation. In Clostridium botulinum (strain Loch Maree / Type A3), this protein is SsrA-binding protein.